A 142-amino-acid chain; its full sequence is Conidial pigment biosynthesis dehydratase EthD (142 aa).

One can recognise an EthD domain in the interval 25 to 121; the sequence is PGMSEAAYRE…PDHQKFADTS (97 aa).

Belongs to the tpcK family.

It participates in pigment biosynthesis. Its function is as follows. Dehydratase; part of the Pks1 gene cluster that mediates the biosynthesis of an anthraquinone derivative pigment that contributes to conidial pigmentation that provides protection from UV radiation, heat and cold stress. The polyketide synthase Pks1 produces 1-acetyl-2,4,6,8-tetrahydroxy-9,10-anthraquinone though condensation of acetyl-CoA with malonyl-CoA. The dehydratase EthD and the laccase Mlac1 further convert the anthraquinone derivative into the final conidial pigment. The protein is Conidial pigment biosynthesis dehydratase EthD of Metarhizium robertsii (strain ARSEF 23 / ATCC MYA-3075) (Metarhizium anisopliae (strain ARSEF 23)).